The sequence spans 303 residues: 2-dehydropantoate 2-reductase (303 aa).

NADP(+)-binding positions include 7-12, N98, and A122; that span reads GCGALG. A substrate-binding site is contributed by N98. K176 serves as the catalytic Proton donor. Substrate is bound by residues N180, N184, N194, and S244. E256 provides a ligand contact to NADP(+).

This sequence belongs to the ketopantoate reductase family. In terms of assembly, monomer.

It is found in the cytoplasm. It carries out the reaction (R)-pantoate + NADP(+) = 2-dehydropantoate + NADPH + H(+). It participates in cofactor biosynthesis; (R)-pantothenate biosynthesis; (R)-pantoate from 3-methyl-2-oxobutanoate: step 2/2. Catalyzes the NADPH-dependent reduction of ketopantoate into pantoic acid. In Salmonella typhi, this protein is 2-dehydropantoate 2-reductase (panE).